Here is a 241-residue protein sequence, read N- to C-terminus: UDP-2,3-diacylglucosamine hydrolase (241 aa).

Asp8, His10, Asp41, Asn79, and His114 together coordinate Mn(2+). 79–80 serves as a coordination point for substrate; sequence NR. Residues Asp122, Ser160, Asn164, Lys167, and His195 each contribute to the substrate site. Mn(2+)-binding residues include His195 and His197.

Belongs to the LpxH family. Requires Mn(2+) as cofactor.

Its subcellular location is the cell inner membrane. The catalysed reaction is UDP-2-N,3-O-bis[(3R)-3-hydroxytetradecanoyl]-alpha-D-glucosamine + H2O = 2-N,3-O-bis[(3R)-3-hydroxytetradecanoyl]-alpha-D-glucosaminyl 1-phosphate + UMP + 2 H(+). It functions in the pathway glycolipid biosynthesis; lipid IV(A) biosynthesis; lipid IV(A) from (3R)-3-hydroxytetradecanoyl-[acyl-carrier-protein] and UDP-N-acetyl-alpha-D-glucosamine: step 4/6. Functionally, hydrolyzes the pyrophosphate bond of UDP-2,3-diacylglucosamine to yield 2,3-diacylglucosamine 1-phosphate (lipid X) and UMP by catalyzing the attack of water at the alpha-P atom. Involved in the biosynthesis of lipid A, a phosphorylated glycolipid that anchors the lipopolysaccharide to the outer membrane of the cell. The protein is UDP-2,3-diacylglucosamine hydrolase of Aeromonas hydrophila subsp. hydrophila (strain ATCC 7966 / DSM 30187 / BCRC 13018 / CCUG 14551 / JCM 1027 / KCTC 2358 / NCIMB 9240 / NCTC 8049).